A 493-amino-acid chain; its full sequence is D-glyceraldehyde dehydrogenase (NADP(+)) (493 aa).

The stretch at 70-92 (RAKELIEKNRAELENIIMEENGK) forms a coiled coil. NADP(+) is bound by residues 146–149 (TPWN), R157, 172–176 (KPSSD), 204–210 (RGSEIGD), 225–248 (GSTA…ILEL), C281, and 381–383 (EIF). Substrate is bound by residues N149 and R157. E247 serves as the catalytic Proton acceptor. C281 is a substrate binding site. The Proton donor role is filled by C281.

Belongs to the aldehyde dehydrogenase family. Glyceraldehyde dehydrogenase subfamily. As to quaternary structure, homotetramer. Dimer of dimers.

It catalyses the reaction D-glyceraldehyde + NADP(+) + H2O = (R)-glycerate + NADPH + 2 H(+). The protein operates within carbohydrate degradation; glycolysis. With respect to regulation, inhibited by calcium, cadmium, copper and mercury ions. Stable for 2 hours at 60 degrees Celsius but activity is decreased to less than 50 percent within 20 minutes at 80 degrees Celsius. Two folds activity enhancement in the presence of 1 mM glutathione, DTT, or 2-mercaptoethanol. Complete activity inhibition by thiol-modifying reagents such as p-chloromercuribenzoic acid or p-hydroxy-mercuribenzoic acid. NADP-dependent dehydrogenase of the nED (non-phosphorylated Entner-Doudoroff) pathway with highest activity towards glyceraldehydes (e.g. D,L-glyceraldehyde and D-glyceraldehyde), to a lesser extent towards D,L-glyceraldehyde-3-phosphate and glycolaldehyde, but no activity towards aliphatic or aromatic aldehydes. The polypeptide is D-glyceraldehyde dehydrogenase (NADP(+)) (Thermoplasma acidophilum (strain ATCC 25905 / DSM 1728 / JCM 9062 / NBRC 15155 / AMRC-C165)).